A 703-amino-acid chain; its full sequence is Stonustoxin subunit alpha (703 aa).

Residues 2 to 265 (SSDLVMPALG…KAQQLIQEIN (264 aa)) are structural MACPF/CDC pore-forming domain. Positions 266–385 (VSKVRRIHTT…GMVEGTQAKF (120 aa)) are structural FAT domain. A thioredoxin (THX) domain region spans residues 386 to 517 (VSNQTELDRE…PRMPFVQGYK (132 aa)). In terms of domain architecture, B30.2/SPRY spans 508 to 703 (PRMPFVQGYK…AGNHGTLRLL (196 aa)).

Belongs to the SNTX/VTX toxin family. As to quaternary structure, heterodimer of alpha and beta subunits; non-covalently linked. Intrachain disulfide bonds may be present in the heterodimer. Post-translationally, not glycosylated. As to expression, expressed by the venom gland.

The protein localises to the secreted. This lethal (towards mammals) heterodimer induces hemolytic activities due to its ability to form pores in the cell membrane. The pore may be composed of 10 SNTX-alpha/beta heterodimers. The toxin elicits potent hypotension which is endothelium-dependent and appears to be mediated by the nitric oxide pathway and activation of potassium channels. In addition, it displays edema-inducing activities, increases vascular permeability. It also shows myotoxic activities and interferes irreversibly with neuromuscular function. It also induces irreversible platelet aggregation in rabbit or rat (but not in human or mouse) whole blood. In addition, it has been observed to increase spontaneous quantal acetylcholine release from isolated frog cutaneous pectoris motor endings. This is Stonustoxin subunit alpha from Synanceia horrida (Estuarine stonefish).